The chain runs to 309 residues: Epidermal retinol dehydrogenase 2 (309 aa).

The chain crosses the membrane as a helical span at residues 11–31 (LLVFLGKSLLSVLEALLFHVI). Residue 44–68 (LITGAGSGLGRLLALQFARLGAVLV) participates in NADP(+) binding. A substrate-binding site is contributed by S177. The active-site Proton acceptor is the Y190. Residues 270-290 (FLYFIVFLKSILPIKTGILIA) form a helical membrane-spanning segment.

This sequence belongs to the short-chain dehydrogenases/reductases (SDR) family.

The protein resides in the endoplasmic reticulum membrane. The enzyme catalyses all-trans-retinol--[retinol-binding protein] + NAD(+) = all-trans-retinal--[retinol-binding protein] + NADH + H(+). Its pathway is cofactor metabolism; retinol metabolism. Oxidoreductase with strong preference for NAD. Active in both the oxidative and reductive directions. Oxidizes all-trans-retinol in all-trans-retinaldehyde. No activity was detected with 11-cis-retinol or 11-cis-retinaldehyde as substrates with either NAD(+)/NADH or NADP(+)/NADPH. In Mus musculus (Mouse), this protein is Epidermal retinol dehydrogenase 2.